The chain runs to 174 residues: Gamma-crystallin D (174 aa).

Beta/gamma crystallin 'Greek key' domains follow at residues 2 to 40 (GKIT…RVDS) and 41 to 83 (GCWM…RLIP). Residues 84-87 (HAGS) form a connecting peptide region. Beta/gamma crystallin 'Greek key' domains are found at residues 88–128 (HRIR…NVLE) and 129–171 (GCWV…RRVM).

It belongs to the beta/gamma-crystallin family. Detected in the superior olivary complex and fibers of the ventral aoustic stria of the auditory hindbrain.

Crystallins are the dominant structural components of the vertebrate eye lens. In Rattus norvegicus (Rat), this protein is Gamma-crystallin D (Crygd).